The following is a 409-amino-acid chain: 5-aminolevulinate synthase (409 aa).

3 residues coordinate substrate: R21, S137, and K156. Pyridoxal 5'-phosphate-binding residues include S189, H217, and T245. The active site involves K248. K248 carries the post-translational modification N6-(pyridoxal phosphate)lysine. Pyridoxal 5'-phosphate is bound by residues T277 and T278. Substrate is bound at residue T365.

Belongs to the class-II pyridoxal-phosphate-dependent aminotransferase family. Homodimer. Requires pyridoxal 5'-phosphate as cofactor.

The catalysed reaction is succinyl-CoA + glycine + H(+) = 5-aminolevulinate + CO2 + CoA. It functions in the pathway porphyrin-containing compound metabolism; protoporphyrin-IX biosynthesis; 5-aminolevulinate from glycine: step 1/1. The sequence is that of 5-aminolevulinate synthase (hemA) from Paracoccus denitrificans (strain Pd 1222).